A 145-amino-acid chain; its full sequence is MFFGTFNHAIDAKGRTSLPVKFRESLAAAGEPRIVLMQYPHWRAVQALPQSVWNELVKKVMDASPLDARTQRSVLKFVSSAHEVDLDANGRVLVPPALREWAGLQKDVVWVGMGRTIHLYDKAAYETQVAEEIPSDQVVDFFGKV.

2 SpoVT-AbrB domains span residues 5–50 and 81–124; these read TFNH…ALPQ and AHEV…DKAA.

This sequence belongs to the MraZ family. Forms oligomers.

It localises to the cytoplasm. The protein localises to the nucleoid. This chain is Transcriptional regulator MraZ, found in Anaeromyxobacter sp. (strain Fw109-5).